An 836-amino-acid chain; its full sequence is DNA gyrase subunit A (836 aa).

The region spanning 46 to 510 (LPDARDGLKP…ISEEIDDESL (465 aa)) is the Topo IIA-type catalytic domain. Tyr134 functions as the O-(5'-phospho-DNA)-tyrosine intermediate in the catalytic mechanism. A GyrA-box motif is present at residues 537 to 543 (QHRGGVG).

The protein belongs to the type II topoisomerase GyrA/ParC subunit family. In terms of assembly, heterotetramer, composed of two GyrA and two GyrB chains. In the heterotetramer, GyrA contains the active site tyrosine that forms a transient covalent intermediate with DNA, while GyrB binds cofactors and catalyzes ATP hydrolysis.

Its subcellular location is the cytoplasm. It carries out the reaction ATP-dependent breakage, passage and rejoining of double-stranded DNA.. A type II topoisomerase that negatively supercoils closed circular double-stranded (ds) DNA in an ATP-dependent manner to modulate DNA topology and maintain chromosomes in an underwound state. Negative supercoiling favors strand separation, and DNA replication, transcription, recombination and repair, all of which involve strand separation. Also able to catalyze the interconversion of other topological isomers of dsDNA rings, including catenanes and knotted rings. Type II topoisomerases break and join 2 DNA strands simultaneously in an ATP-dependent manner. The sequence is that of DNA gyrase subunit A from Mycoplasma genitalium (strain ATCC 33530 / DSM 19775 / NCTC 10195 / G37) (Mycoplasmoides genitalium).